The following is a 158-amino-acid chain: Methylglyoxal synthase (158 aa).

The MGS-like domain occupies Met-1–Glu-158. Substrate is bound by residues His-12, Lys-16, Thr-38 to Thr-41, and Ser-63 to Gly-64. The active-site Proton donor/acceptor is the Asp-69. His-96 provides a ligand contact to substrate.

It belongs to the methylglyoxal synthase family.

It carries out the reaction dihydroxyacetone phosphate = methylglyoxal + phosphate. Its function is as follows. Catalyzes the formation of methylglyoxal from dihydroxyacetone phosphate. This Treponema socranskii protein is Methylglyoxal synthase.